Reading from the N-terminus, the 299-residue chain is ATP phosphoribosyltransferase (299 aa).

Belongs to the ATP phosphoribosyltransferase family. Long subfamily. Mg(2+) serves as cofactor.

The protein resides in the cytoplasm. It catalyses the reaction 1-(5-phospho-beta-D-ribosyl)-ATP + diphosphate = 5-phospho-alpha-D-ribose 1-diphosphate + ATP. It participates in amino-acid biosynthesis; L-histidine biosynthesis; L-histidine from 5-phospho-alpha-D-ribose 1-diphosphate: step 1/9. Feedback inhibited by histidine. In terms of biological role, catalyzes the condensation of ATP and 5-phosphoribose 1-diphosphate to form N'-(5'-phosphoribosyl)-ATP (PR-ATP). Has a crucial role in the pathway because the rate of histidine biosynthesis seems to be controlled primarily by regulation of HisG enzymatic activity. This Shewanella woodyi (strain ATCC 51908 / MS32) protein is ATP phosphoribosyltransferase.